The sequence spans 325 residues: MRSTLRKDLIELFSQAGNEFISGQKISDALGCSRTAVWKHIEELRKEGYEVEAVRRKGYRLIKKPGKLSESEIRFGLKTEVMGQHLIYHDVLSSTQKTAHELANNNAPEGTLVVADKQTAGRGRMSRVWHSQEGNGVWMSLILRPDIPLQKTPQLTLLAAVAVVQGIEEAAGIQTDIKWPNDILINGKKTVGILTEMQAEEDRVRSVIIGIGINVNQQPNDFPDELKDIATSLSQAAGEKIDRAGVIQHILLCFEKRYRDYMTHGFTPIKLLWESYALGIGTNMRARTLNGTFYGKALGIDDEGVLLLETNEGIKKIYSADIELG.

A DNA-binding region (H-T-H motif) is located at residues 23 to 42; sequence GQKISDALGCSRTAVWKHIE. One can recognise a BPL/LPL catalytic domain in the interval 74–262; sequence RFGLKTEVMG…CFEKRYRDYM (189 aa). Biotin-binding positions include Q118, 122-124, and K189; that span reads RGR.

It belongs to the biotin--protein ligase family.

It carries out the reaction biotin + L-lysyl-[protein] + ATP = N(6)-biotinyl-L-lysyl-[protein] + AMP + diphosphate + H(+). Its function is as follows. Acts both as a biotin--[acetyl-CoA-carboxylase] ligase and a repressor. The protein is Bifunctional ligase/repressor BirA of Bacillus subtilis (strain 168).